The primary structure comprises 434 residues: Adenylosuccinate synthetase (434 aa).

GTP-binding positions include 22-28 (GDEGKGK) and 50-52 (GHT). Aspartate 23 (proton acceptor) is an active-site residue. Positions 23 and 50 each coordinate Mg(2+). IMP contacts are provided by residues 23 to 26 (DEGK), 48 to 51 (NAGH), threonine 139, arginine 153, glutamine 234, threonine 249, and arginine 313. The active-site Proton donor is histidine 51. 309–315 (ATTGRKR) contributes to the substrate binding site. GTP is bound by residues arginine 315, 341–343 (KLD), and 423–425 (SVG).

The protein belongs to the adenylosuccinate synthetase family. In terms of assembly, homodimer. It depends on Mg(2+) as a cofactor.

Its subcellular location is the cytoplasm. It carries out the reaction IMP + L-aspartate + GTP = N(6)-(1,2-dicarboxyethyl)-AMP + GDP + phosphate + 2 H(+). Its pathway is purine metabolism; AMP biosynthesis via de novo pathway; AMP from IMP: step 1/2. Its function is as follows. Plays an important role in the de novo pathway of purine nucleotide biosynthesis. Catalyzes the first committed step in the biosynthesis of AMP from IMP. The protein is Adenylosuccinate synthetase of Pelodictyon phaeoclathratiforme (strain DSM 5477 / BU-1).